The primary structure comprises 704 residues: Polyribonucleotide nucleotidyltransferase (704 aa).

Positions 488 and 494 each coordinate Mg(2+). In terms of domain architecture, KH spans 555-614 (PRITTLKINPEKIRDVIGKGGATIRALTEETGTTIELEDDGTVKIASANGDATKEAIRRI). The S1 motif domain maps to 624 to 692 (GTIYNGKVVR…RQGRVRLSMK (69 aa)).

This sequence belongs to the polyribonucleotide nucleotidyltransferase family. In terms of assembly, component of the RNA degradosome, which is a multiprotein complex involved in RNA processing and mRNA degradation. Requires Mg(2+) as cofactor.

The protein resides in the cytoplasm. It catalyses the reaction RNA(n+1) + phosphate = RNA(n) + a ribonucleoside 5'-diphosphate. In terms of biological role, involved in mRNA degradation. Catalyzes the phosphorolysis of single-stranded polyribonucleotides processively in the 3'- to 5'-direction. The polypeptide is Polyribonucleotide nucleotidyltransferase (Shewanella sediminis (strain HAW-EB3)).